A 72-amino-acid polypeptide reads, in one-letter code: Large ribosomal subunit protein uL29 (72 aa).

It belongs to the universal ribosomal protein uL29 family. As to quaternary structure, part of the 50S ribosomal subunit.

In Pyrococcus furiosus (strain ATCC 43587 / DSM 3638 / JCM 8422 / Vc1), this protein is Large ribosomal subunit protein uL29.